Consider the following 356-residue polypeptide: Dual-specificity RNA methyltransferase RlmN (356 aa).

E89 functions as the Proton acceptor in the catalytic mechanism. The region spanning S108–D341 is the Radical SAM core domain. A disulfide bridge connects residues C115 and C346. 3 residues coordinate [4Fe-4S] cluster: C122, C126, and C129. Residues G172–E173, S204, S227–H229, and N303 contribute to the S-adenosyl-L-methionine site. C346 functions as the S-methylcysteine intermediate in the catalytic mechanism.

It belongs to the radical SAM superfamily. RlmN family. It depends on [4Fe-4S] cluster as a cofactor.

The protein resides in the cytoplasm. The enzyme catalyses adenosine(2503) in 23S rRNA + 2 reduced [2Fe-2S]-[ferredoxin] + 2 S-adenosyl-L-methionine = 2-methyladenosine(2503) in 23S rRNA + 5'-deoxyadenosine + L-methionine + 2 oxidized [2Fe-2S]-[ferredoxin] + S-adenosyl-L-homocysteine. The catalysed reaction is adenosine(37) in tRNA + 2 reduced [2Fe-2S]-[ferredoxin] + 2 S-adenosyl-L-methionine = 2-methyladenosine(37) in tRNA + 5'-deoxyadenosine + L-methionine + 2 oxidized [2Fe-2S]-[ferredoxin] + S-adenosyl-L-homocysteine. In terms of biological role, specifically methylates position 2 of adenine 2503 in 23S rRNA and position 2 of adenine 37 in tRNAs. m2A2503 modification seems to play a crucial role in the proofreading step occurring at the peptidyl transferase center and thus would serve to optimize ribosomal fidelity. This Campylobacter jejuni subsp. jejuni serotype O:2 (strain ATCC 700819 / NCTC 11168) protein is Dual-specificity RNA methyltransferase RlmN.